The chain runs to 136 residues: Large ribosomal subunit protein uL16 (136 aa).

This sequence belongs to the universal ribosomal protein uL16 family. As to quaternary structure, part of the 50S ribosomal subunit.

Its function is as follows. Binds 23S rRNA and is also seen to make contacts with the A and possibly P site tRNAs. This is Large ribosomal subunit protein uL16 from Shewanella loihica (strain ATCC BAA-1088 / PV-4).